The chain runs to 412 residues: Phosphoglycerate kinase (412 aa).

Residues 24 to 26, Arg-47, 70 to 73, Arg-130, and Arg-167 each bind substrate; these read DLN and HLGR. Residues Lys-217, Gly-312, Glu-343, and 369–372 contribute to the ATP site; that span reads GGDS.

It belongs to the phosphoglycerate kinase family. In terms of assembly, monomer.

It is found in the cytoplasm. The enzyme catalyses (2R)-3-phosphoglycerate + ATP = (2R)-3-phospho-glyceroyl phosphate + ADP. Its pathway is carbohydrate degradation; glycolysis; pyruvate from D-glyceraldehyde 3-phosphate: step 2/5. This is Phosphoglycerate kinase from Kineococcus radiotolerans (strain ATCC BAA-149 / DSM 14245 / SRS30216).